The following is a 29-amino-acid chain: Trypsin inhibitor 2 (29 aa).

3 cysteine pairs are disulfide-bonded: Cys3/Cys20, Cys10/Cys22, and Cys16/Cys28.

The protein belongs to the protease inhibitor I7 (squash-type serine protease inhibitor) family.

The protein localises to the secreted. In terms of biological role, inhibits trypsin. This is Trypsin inhibitor 2 from Bryonia dioica (Red bryony).